Reading from the N-terminus, the 113-residue chain is Large ribosomal subunit protein bL19 (113 aa).

The protein belongs to the bacterial ribosomal protein bL19 family.

This protein is located at the 30S-50S ribosomal subunit interface and may play a role in the structure and function of the aminoacyl-tRNA binding site. In Mycobacterium avium (strain 104), this protein is Large ribosomal subunit protein bL19.